A 669-amino-acid chain; its full sequence is Small ribosomal subunit protein mS39 (669 aa).

A mitochondrion-targeting transit peptide spans 1-13 (MAAPCVRLGSVRC). 11 PPR repeats span residues 129–163 (IEGV…GTAP), 164–199 (SLET…DDQD), 209–239 (RPGQ…MPER), 240–274 (NAHS…RLTA), 275–314 (DVQT…NVRP), 315–351 (NLLT…NIEP), 352–392 (SLGT…FTLR), 396–430 (DVYF…DNRG), 438–472 (QSTY…LYYP), 473–507 (NSRG…GHSN), and 556–590 (SSAS…HRVP). Residues 186–218 (DIQTSEQNQQDDQDQQETEDSKKRPGQYRKASE) are disordered. Residues 194 to 203 (QQDDQDQQET) are compositionally biased toward acidic residues. The segment at 648-669 (EDLQKSHSSSSSSSESSDSDRE) is disordered. The span at 653–663 (SHSSSSSSSES) shows a compositional bias: low complexity.

The protein belongs to the mitochondrion-specific ribosomal protein mS39 family.

The protein localises to the mitochondrion. In terms of biological role, mitochondrial protein that may have a role in mitochondrial translation. This Xenopus laevis (African clawed frog) protein is Small ribosomal subunit protein mS39 (ptcd3).